A 320-amino-acid polypeptide reads, in one-letter code: Serpentine receptor class gamma-15 (320 aa).

7 helical membrane passes run 29-49 (TISY…TILV), 57-77 (GSSF…IVFI), 85-105 (FLYV…SSLI), 151-171 (VSLV…IISP), 197-217 (LFQS…TSVT), 240-260 (IYIS…AFCT), and 268-288 (LFTA…VILF).

It belongs to the nematode receptor-like protein srg family.

The protein localises to the membrane. The polypeptide is Serpentine receptor class gamma-15 (srg-15) (Caenorhabditis elegans).